The sequence spans 188 residues: Elongation factor P (188 aa).

K34 is subject to N6-(3,6-diaminohexanoyl)-5-hydroxylysine.

Belongs to the elongation factor P family. In terms of processing, may be beta-lysylated on the epsilon-amino group of Lys-34 by the combined action of EpmA and EpmB, and then hydroxylated on the C5 position of the same residue by EpmC (if this protein is present). Lysylation is critical for the stimulatory effect of EF-P on peptide-bond formation. The lysylation moiety may extend toward the peptidyltransferase center and stabilize the terminal 3-CCA end of the tRNA. Hydroxylation of the C5 position on Lys-34 may allow additional potential stabilizing hydrogen-bond interactions with the P-tRNA.

The protein localises to the cytoplasm. The protein operates within protein biosynthesis; polypeptide chain elongation. Its function is as follows. Involved in peptide bond synthesis. Alleviates ribosome stalling that occurs when 3 or more consecutive Pro residues or the sequence PPG is present in a protein, possibly by augmenting the peptidyl transferase activity of the ribosome. Modification of Lys-34 is required for alleviation. This chain is Elongation factor P, found in Vibrio cholerae serotype O1 (strain ATCC 39541 / Classical Ogawa 395 / O395).